The chain runs to 343 residues: E3 ubiquitin-protein ligase RNF113A (343 aa).

The residue at position 2 (Ala-2) is an N-acetylalanine. The important for interaction with SNRNP200/BRR2 stretch occupies residues 2 to 60 (AEQLSPGKAVDQVCTFLFKKPGRKGAAGRRKRPACDPEPGESGSSSDEGCTVVRPEKKR). Phosphoserine is present on Ser-6. The span at 22 to 33 (PGRKGAAGRRKR) shows a compositional bias: basic residues. A disordered region spans residues 22-96 (PGRKGAAGRR…EEEENEPESL (75 aa)). Positions 41–50 (GESGSSSDEG) are enriched in low complexity. The interval 50–61 (GCTVVRPEKKRV) is important for interaction with CXCR4. Phosphoserine occurs at positions 84 and 85. Positions 84-93 (SSEEEEENEP) are enriched in acidic residues. Residues 196 to 224 (DYQPDICKDYKETGFCGFGDSCKFLHDRS) form a C3H1-type zinc finger. At Ser-253 the chain carries Phosphoserine. The segment at 262 to 300 (CFICRQSFQNPVVTKCRHYFCESCALQHFRTTPRCYVCD) adopts an RING-type zinc-finger fold. Residues 322-343 (ATGEGGASDLPEDPDEDAIPIT) are disordered. Positions 331-343 (LPEDPDEDAIPIT) are enriched in acidic residues.

Component of pre-catalytic and catalytic spliceosome complexes. Interacts (via N-terminus) with the spliceosome subunit SNRNP200/BRR2. Component of the minor spliceosome, which splices U12-type introns. Within this complex, interacts with SCNM1 and CRIPT. Ubiquitous.

The protein resides in the nucleus. Its subcellular location is the nucleus speckle. It catalyses the reaction S-ubiquitinyl-[E2 ubiquitin-conjugating enzyme]-L-cysteine + [acceptor protein]-L-lysine = [E2 ubiquitin-conjugating enzyme]-L-cysteine + N(6)-ubiquitinyl-[acceptor protein]-L-lysine.. Its pathway is protein modification; protein ubiquitination. Its function is as follows. Required for pre-mRNA splicing as component of the spliceosome. As a component of the minor spliceosome, involved in the splicing of U12-type introns in pre-mRNAs. E3 ubiquitin-protein ligase that catalyzes the transfer of ubiquitin onto target proteins. Catalyzes polyubiquitination of SNRNP200/BRR2 with non-canonical 'Lys-63'-linked polyubiquitin chains. Plays a role in DNA repair via its role in the synthesis of 'Lys-63'-linked polyubiquitin chains that recruit ALKBH3 and the ASCC complex to sites of DNA damage by alkylating agents. Ubiquitinates CXCR4, leading to its degradation, and thereby contributes to the termination of CXCR4 signaling. The protein is E3 ubiquitin-protein ligase RNF113A (RNF113A) of Homo sapiens (Human).